A 76-amino-acid polypeptide reads, in one-letter code: DNA-directed RNA polymerase subunit epsilon (76 aa).

The protein belongs to the RNA polymerase subunit epsilon family. As to quaternary structure, RNAP is composed of a core of 2 alpha, a beta and a beta' subunit. The core is associated with a delta subunit, and at least one of epsilon or omega. When a sigma factor is associated with the core the holoenzyme is formed, which can initiate transcription.

The catalysed reaction is RNA(n) + a ribonucleoside 5'-triphosphate = RNA(n+1) + diphosphate. In terms of biological role, a non-essential component of RNA polymerase (RNAP). This is DNA-directed RNA polymerase subunit epsilon from Streptococcus gordonii (strain Challis / ATCC 35105 / BCRC 15272 / CH1 / DL1 / V288).